The chain runs to 480 residues: Probable glycosyltransferase At5g25310 (480 aa).

At 1–10 the chain is on the cytoplasmic side; that stretch reads MDKFQSKFTR. The chain crosses the membrane as a helical; Signal-anchor for type II membrane protein span at residues 11–31; the sequence is FGFISICFGSIALVLLISHCS. At 32–480 the chain is on the lumenal side; that stretch reads TSFFDYSFQK…WLRRLNLKLT (449 aa). Residues N85, N120, N243, N271, and N281 are each glycosylated (N-linked (GlcNAc...) asparagine).

It belongs to the glycosyltransferase 47 family.

Its subcellular location is the golgi apparatus membrane. Its function is as follows. May be involved in cell wall biosynthesis. This Arabidopsis thaliana (Mouse-ear cress) protein is Probable glycosyltransferase At5g25310.